The chain runs to 334 residues: D-alanine--D-alanine ligase (334 aa).

Positions K124–L329 constitute an ATP-grasp domain. Residue A154–E209 coordinates ATP. Mg(2+) contacts are provided by D283, E296, and N298.

This sequence belongs to the D-alanine--D-alanine ligase family. Requires Mg(2+) as cofactor. Mn(2+) serves as cofactor.

The protein localises to the cytoplasm. It carries out the reaction 2 D-alanine + ATP = D-alanyl-D-alanine + ADP + phosphate + H(+). The protein operates within cell wall biogenesis; peptidoglycan biosynthesis. Its function is as follows. Cell wall formation. This chain is D-alanine--D-alanine ligase, found in Shewanella pealeana (strain ATCC 700345 / ANG-SQ1).